The primary structure comprises 367 residues: Uroporphyrinogen decarboxylase (367 aa).

N-acetylmethionine is present on methionine 1. The coproporphyrinogen I site is built by arginine 37, alanine 39, arginine 41, arginine 50, aspartate 86, tyrosine 164, serine 219, and histidine 339. Coproporphyrinogen III is bound by residues arginine 37, alanine 39, and arginine 41. Coproporphyrinogen III is bound by residues aspartate 86, tyrosine 164, serine 219, and histidine 339.

This sequence belongs to the uroporphyrinogen decarboxylase family. In terms of assembly, homodimer.

The protein localises to the cytoplasm. The protein resides in the cytosol. It carries out the reaction uroporphyrinogen III + 4 H(+) = coproporphyrinogen III + 4 CO2. The enzyme catalyses uroporphyrinogen I + 4 H(+) = coproporphyrinogen I + 4 CO2. The protein operates within porphyrin-containing compound metabolism; protoporphyrin-IX biosynthesis; coproporphyrinogen-III from 5-aminolevulinate: step 4/4. In terms of biological role, catalyzes the sequential decarboxylation of the four acetate side chains of uroporphyrinogen to form coproporphyrinogen and participates in the fifth step in the heme biosynthetic pathway. Isomer I or isomer III of uroporphyrinogen may serve as substrate, but only coproporphyrinogen III can ultimately be converted to heme. In vitro also decarboxylates pentacarboxylate porphyrinogen I. The polypeptide is Uroporphyrinogen decarboxylase (Ovis aries (Sheep)).